A 180-amino-acid chain; its full sequence is Acireductone dioxygenase (180 aa).

Residues His-97, His-99, Glu-103, and His-141 each coordinate Fe(2+). Positions 97, 99, 103, and 141 each coordinate Ni(2+).

This sequence belongs to the acireductone dioxygenase (ARD) family. As to quaternary structure, monomer. The cofactor is Fe(2+). Requires Ni(2+) as cofactor.

The catalysed reaction is 1,2-dihydroxy-5-(methylsulfanyl)pent-1-en-3-one + O2 = 3-(methylsulfanyl)propanoate + CO + formate + 2 H(+). It carries out the reaction 1,2-dihydroxy-5-(methylsulfanyl)pent-1-en-3-one + O2 = 4-methylsulfanyl-2-oxobutanoate + formate + 2 H(+). Its pathway is amino-acid biosynthesis; L-methionine biosynthesis via salvage pathway; L-methionine from S-methyl-5-thio-alpha-D-ribose 1-phosphate: step 5/6. In terms of biological role, catalyzes 2 different reactions between oxygen and the acireductone 1,2-dihydroxy-3-keto-5-methylthiopentene (DHK-MTPene) depending upon the metal bound in the active site. Fe-containing acireductone dioxygenase (Fe-ARD) produces formate and 2-keto-4-methylthiobutyrate (KMTB), the alpha-ketoacid precursor of methionine in the methionine recycle pathway. Ni-containing acireductone dioxygenase (Ni-ARD) produces methylthiopropionate, carbon monoxide and formate, and does not lie on the methionine recycle pathway. In Yersinia enterocolitica serotype O:8 / biotype 1B (strain NCTC 13174 / 8081), this protein is Acireductone dioxygenase.